We begin with the raw amino-acid sequence, 256 residues long: uncharacterized protein (256 aa).

Helical transmembrane passes span 155 to 175 (ITGMLAAYAVLQAVEGVGLWL) and 203 to 223 (ITTTRVVTFSINVAAVVYLLI).

Its subcellular location is the cell membrane. This is an uncharacterized protein from Mycobacterium bovis (strain ATCC BAA-935 / AF2122/97).